A 142-amino-acid polypeptide reads, in one-letter code: Large ribosomal subunit protein uL22c (142 aa).

It belongs to the universal ribosomal protein uL22 family. As to quaternary structure, part of the 50S ribosomal subunit.

It is found in the plastid. The protein resides in the chloroplast. This protein binds specifically to 23S rRNA. In terms of biological role, the globular domain of the protein is located near the polypeptide exit tunnel on the outside of the subunit, while an extended beta-hairpin is found that lines the wall of the exit tunnel in the center of the 70S ribosome. This is Large ribosomal subunit protein uL22c (rpl22) from Picea abies (Norway spruce).